A 325-amino-acid chain; its full sequence is MFANLKYVSLGILVFQTTSLVLTMRYSRTLKEEGPRYLSSTAVVVAELLKIMACILLVYKDSKCSLRALNRVLHDEILNKPMETLKLAIPSGIYTLQNNLLYVALSNLDAATYQVTYQLKILTTALFSVSMLSKKLGVYQWLSLVILMTGVAFVQWPSDSQLDSKELSAGSQFVGLMAVLTACFSSGFAGVYFEKILKETKQSVWIRNIQLGFFGSIFGLMGVYIYDGELVSKNGFFQGYNRLTWIVVVLQALGGLVIAAVIKYADNILKGFATSLSIILSTLISYFWLQDFVPTSVFFLGAILVITATFLYGYDPKPAGNPTKA.

Transmembrane regions (helical) follow at residues 8 to 24 (VSLGILVFQTTSLVLTM), 42 to 58 (AVVVAELLKIMACILLV), 138 to 154 (VYQWLSLVILMTGVAFV), 173 to 189 (FVGLMAVLTACFSSGFA), 209 to 225 (IQLGFFGSIFGLMGVYI), 246 to 262 (IVVVLQALGGLVIAAVI), 268 to 284 (ILKGFATSLSIILSTLI), and 295 to 311 (TSVFFLGAILVITATFL).

This sequence belongs to the nucleotide-sugar transporter family. SLC35A subfamily. As to quaternary structure, interacts with SLC35A2; the interaction is reduced in the presence of SLC35A4. Found in a complex with SLC35A2 and SLC35A4. Interacts with MGAT4B. Post-translationally, O-Glcnacylation regulates the stability of SLC35A3 and the specific complex formation with MGAT4B.

The protein resides in the golgi apparatus membrane. The enzyme catalyses UMP(out) + UDP-N-acetyl-alpha-D-glucosamine(in) = UMP(in) + UDP-N-acetyl-alpha-D-glucosamine(out). In terms of biological role, transports diphosphate-N-acetylglucosamine (UDP-GlcNAc) from the cytosol into the lumen of the Golgi apparatus, functioning as an antiporter that exchanges UDP-N-acetyl-alpha-D-glucosamine for UMP. May supply UDP-GlcNAc as substrate for Golgi-resident glycosyltransferases that generate highly branched, multiantennary complex N-glycans and keratan sulfate. However, the exact role of SLC35A3 still needs to be elucidated, it could be a member of a catalytically more efficient multiprotein complex rather than function independently as a single transporter. The protein is UDP-N-acetylglucosamine transporter (SLC35A3) of Homo sapiens (Human).